A 464-amino-acid chain; its full sequence is UDP-N-acetylmuramate--L-alanine ligase (464 aa).

118 to 124 (GTHGKTT) serves as a coordination point for ATP.

The protein belongs to the MurCDEF family.

It is found in the cytoplasm. It carries out the reaction UDP-N-acetyl-alpha-D-muramate + L-alanine + ATP = UDP-N-acetyl-alpha-D-muramoyl-L-alanine + ADP + phosphate + H(+). The protein operates within cell wall biogenesis; peptidoglycan biosynthesis. Functionally, cell wall formation. The protein is UDP-N-acetylmuramate--L-alanine ligase of Dinoroseobacter shibae (strain DSM 16493 / NCIMB 14021 / DFL 12).